Consider the following 525-residue polypeptide: Cytochrome P450 monooxygenase bsc2 (525 aa).

Residues 12–32 (SLFILWLTTLLVSVLATAAYI) form a helical membrane-spanning segment. N-linked (GlcNAc...) asparagine glycans are attached at residues Asn-86 and Asn-317. Cys-456 serves as a coordination point for heme.

It belongs to the cytochrome P450 family. Requires heme as cofactor.

Its subcellular location is the membrane. It functions in the pathway mycotoxin biosynthesis. Cytochrome P450 monooxygenase; part of the gene cluster that mediates the biosynthesis of the diterpene glucoside brassicicene C. In the first step of the brassicicene C biosynthesis, the bifunctional diterpene synthase bsc8 that possesses both prenyl transferase and terpene cyclase activity, converts isopentenyl diphosphate and dimethylallyl diphosphate into geranylgeranyl diphosphate (GGDP) that is further converted into fusicocca-2,10(14)-diene, the first precursor for brassicicene C. Fusicocca-2,10(14)-diene is then substrate of cytochrome P450 monooxygenase bsc1 for hydroxylation at the C-8 position. Oxidation at C-16 position to aldehyde is then catalyzed by the cytochrome P450 monooyxygenase bsc7, yielding fusicocca-2,10(14)-diene-8-beta,16-diol. Follows the isomerization of the double bond and reduction of aldehyde to alcohol catalyzed by the short-chain dehydrogenase/reductase bsc3 to yield the diol compound fusicocca-1,10(14)-diene-8 beta,16-diol. The next step is the oxidation at the C-3 position of fusicocca-2,10(14)-diene-8-beta,16-diol catalyzed by the alpha-ketoglutarate dependent dioxygenase bsc9, to produce a triol compound. Methylation of the hydroxy group at position 16 is performed by the methyltransferase bsc6. 16-O-methylation is followed by oxidation at the C-13 position to ketone and an alkyl shift of the methyl group leads to brassicicene C. Although the probable acetyltransferase bsc4 is included in the gene cluster, no acetylation reactions are necessary for brassicicene C biosynthesis. However, the fact that brassicicene E, which is a structurally related compound having an acetoxy group at position 12, was previously isolated from another strain of A.brassicicola suggests that the ATCC 96836 strain might also produce a small amount of brassicicene E. This is Cytochrome P450 monooxygenase bsc2 from Alternaria brassicicola (Dark leaf spot agent).